A 432-amino-acid chain; its full sequence is Enolase (432 aa).

Glutamine 166 provides a ligand contact to (2R)-2-phosphoglycerate. The Proton donor role is filled by glutamate 208. Mg(2+) is bound by residues aspartate 245, glutamate 291, and aspartate 318. Lysine 343, arginine 372, serine 373, and lysine 394 together coordinate (2R)-2-phosphoglycerate. Lysine 343 serves as the catalytic Proton acceptor.

The protein belongs to the enolase family. Mg(2+) is required as a cofactor.

It localises to the cytoplasm. The protein resides in the secreted. The protein localises to the cell surface. The catalysed reaction is (2R)-2-phosphoglycerate = phosphoenolpyruvate + H2O. Its pathway is carbohydrate degradation; glycolysis; pyruvate from D-glyceraldehyde 3-phosphate: step 4/5. In terms of biological role, catalyzes the reversible conversion of 2-phosphoglycerate (2-PG) into phosphoenolpyruvate (PEP). It is essential for the degradation of carbohydrates via glycolysis. This chain is Enolase, found in Leptospira interrogans serogroup Icterohaemorrhagiae serovar copenhageni (strain Fiocruz L1-130).